Here is a 666-residue protein sequence, read N- to C-terminus: Threonine--tRNA ligase (666 aa).

In terms of domain architecture, TGS spans Met-1 to Arg-64. The segment at Asp-245–Pro-553 is catalytic. Zn(2+) contacts are provided by Cys-347, His-398, and His-530.

Belongs to the class-II aminoacyl-tRNA synthetase family. Homodimer. Requires Zn(2+) as cofactor.

It is found in the cytoplasm. The enzyme catalyses tRNA(Thr) + L-threonine + ATP = L-threonyl-tRNA(Thr) + AMP + diphosphate + H(+). Catalyzes the attachment of threonine to tRNA(Thr) in a two-step reaction: L-threonine is first activated by ATP to form Thr-AMP and then transferred to the acceptor end of tRNA(Thr). Also edits incorrectly charged L-seryl-tRNA(Thr). In Allorhizobium ampelinum (strain ATCC BAA-846 / DSM 112012 / S4) (Agrobacterium vitis (strain S4)), this protein is Threonine--tRNA ligase.